The primary structure comprises 619 residues: MELTSEEYEELRGLLGTPDIGNADTLKKAFLKACKVHHPDKGGNEEAMKRLLYLYNKAKIAASATTSQVPEYGTSQWEQWWEEFNQGFDEQDLHCDEELEPSDNEEENPAGSQAPGSQATPPKKPRTSPDFPEVLKEYVSNALFTNRTYNCFIIFTTAEKGKELYPCIQAAYKCTFIALYMYNGDSVLYIITVGKHRVNAMENLCSKKCTVSFLQAKGVLKPQEAYNVCCTFELISQNIQGGLPSSFFNPVQEEEKSVNWKLISEFACSIKCTDPLLLMALYLEFTTAPEACKVCDNPRRLEHRRHHTKDHTLNALLFQDSKTQKTICNQACDTVLAKRRLDMKTLTRNELLVQRWQGLFQEMEDLFGARGEEHLAHRMAAVMWLNALHPNMPDVIFNYIKMVVENKPKQRYLLLKGPVNCGKTTVAAGLIGLCGGAYLNINCPPERLAFELGMAIDQFTVVFEDVKGKKSSKSSLQTGIGFENLDNLRDHLDGAVPVNLERKHQNKVTQIFPPGIVTCNEYDIPLTVKIRMYQKVELLHNYNLYKSLKNTEEVGKKRYLQSGITWLLLLIYFRSVDDFTEKLQECVVKWKERIETEVGDMWLLTMKENIEQGKNILEK.

Residues 10 to 73 form the J domain; sequence ELRGLLGTPD…ATTSQVPEYG (64 aa). The LXCXE motif signature appears at 93–97; the sequence is LHCDE. Over residues 98-108 the composition is skewed to acidic residues; that stretch reads ELEPSDNEEEN. The interval 98-131 is disordered; the sequence is ELEPSDNEEENPAGSQAPGSQATPPKKPRTSPDF. Ser-102 carries the post-translational modification Phosphoserine; by host. Residues 110-120 show a composition bias toward polar residues; sequence AGSQAPGSQAT. Thr-120 is modified (phosphothreonine; by host). A Nuclear localization signal motif is present at residues 121-128; the sequence is PPKKPRTS. The segment at residues 132-245 is a DNA-binding region (T-ag OBD); sequence PEVLKEYVSN…SQNIQGGLPS (114 aa). A T-ag D1-type zinc finger spans residues 255–348; it reads EKSVNWKLIS…RRLDMKTLTR (94 aa). Residues Cys-292, Cys-295, His-303, and His-307 each contribute to the Zn(2+) site. Positions 391–586 constitute an SF3 helicase domain; that stretch reads NMPDVIFNYI…DDFTEKLQEC (196 aa). Residue 417–424 participates in ATP binding; sequence GPVNCGKT.

As to quaternary structure, forms homohexamers in the presence of ATP. Interacts with host HDAC1. Interacts (via LXCXE domain) with host RB1; the interaction induces the aberrant dissociation of RB1-E2F1 complex thereby disrupting RB1's activity. Interacts (via LXCXE domain) with host pRB-related proteins RBL1 and RBL2. Interacts (via C-terminus) with host TOP1 and POLA1 allowing DNA replication. Interacts with host TP53, inhibiting TP53 binding to DNA. Interacts with host preinitiation complex components TBP, TFIIA and TFIID to regulate transcription initiation. It depends on Mg(2+) as a cofactor. In terms of processing, phosphorylated on both serine and threonine residues. Small t antigen inhibits the dephosphorylation by the AC form of PP2A. O-Glycosylated near the C-terminal region. Post-translationally, acetylated by CBP in a TP53-dependent manner.

The protein localises to the host nucleus. The enzyme catalyses Couples ATP hydrolysis with the unwinding of duplex DNA by translocating in the 3'-5' direction.. It carries out the reaction ATP + H2O = ADP + phosphate + H(+). Isoform large T antigen is a key early protein essential for both driving viral replication and inducing cellular transformation. Plays a role in viral genome replication by driving entry of quiescent cells into the cell cycle and by autoregulating the synthesis of viral early mRNA. Displays highly oncogenic activities by corrupting the host cellular checkpoint mechanisms that guard cell division and the transcription, replication, and repair of DNA. Participates in the modulation of cellular gene expression preceeding viral DNA replication. This step involves binding to host key cell cycle regulators retinoblastoma protein RB1/pRb and TP53. Induces the disassembly of host E2F1 transcription factors from RB1, thus promoting transcriptional activation of E2F1-regulated S-phase genes. Inhibits host TP53 binding to DNA, abrogating the ability of TP53 to stimulate gene expression. Plays the role of a TFIID-associated factor (TAF) in transcription initiation for all three RNA polymerases, by stabilizing the TBP-TFIIA complex on promoters. Initiates viral DNA replication and unwinding via interactions with the viral origin of replication. Binds two adjacent sites in the SV40 origin. The replication fork movement is facilitated by Large T antigen helicase activity. Has processive 3'-5' DNA helicase activity which requires a short 3' single-stranded region and ATP. Activates the transcription of viral late mRNA, through host TBP and TFIIA stabilization. Interferes with histone deacetylation mediated by HDAC1, leading to activation of transcription. The polypeptide is Large T antigen (Bovine polyomavirus (BPyV)).